We begin with the raw amino-acid sequence, 158 residues long: Ribonuclease H (158 aa).

In terms of domain architecture, RNase H type-1 spans 9 to 155; the sequence is AFKPVELYTD…CDKLAVAAYQ (147 aa). Mg(2+) is bound by residues aspartate 18, glutamate 58, aspartate 80, and aspartate 147.

It belongs to the RNase H family. As to quaternary structure, monomer. Mg(2+) is required as a cofactor.

Its subcellular location is the cytoplasm. The catalysed reaction is Endonucleolytic cleavage to 5'-phosphomonoester.. In terms of biological role, endonuclease that specifically degrades the RNA of RNA-DNA hybrids. In Rhodopirellula baltica (strain DSM 10527 / NCIMB 13988 / SH1), this protein is Ribonuclease H.